The chain runs to 205 residues: Beta-crystallin B2 (205 aa).

The residue at position 2 (Ala2) is an N-acetylalanine. Positions 2-16 (ASDHQTQAGKPQPLN) are N-terminal arm. Beta/gamma crystallin 'Greek key' domains follow at residues 17-56 (PKII…LVQA) and 57-101 (GPWV…RPIK). Residues 102–106 (VDSQE) form a connecting peptide region. Beta/gamma crystallin 'Greek key' domains lie at 107 to 148 (HKII…RVQS) and 149 to 191 (GTWV…RRIR). The segment at 193 to 205 (MQWHQRGAFHPSN) is C-terminal arm.

It belongs to the beta/gamma-crystallin family. As to quaternary structure, homo/heterodimer, or complexes of higher-order. The structure of beta-crystallin oligomers seems to be stabilized through interactions between the N-terminal arms.

In terms of biological role, crystallins are the dominant structural components of the vertebrate eye lens. This Canis lupus familiaris (Dog) protein is Beta-crystallin B2 (CRYBB2).